The chain runs to 558 residues: Urocanate hydratase (558 aa).

Residues 53 to 54 (GG), Q131, 177 to 179 (GMG), E197, R202, 243 to 244 (NA), 264 to 268 (QTSAH), 274 to 275 (YL), and Y323 each bind NAD(+). C411 is an active-site residue. Residue G493 participates in NAD(+) binding.

This sequence belongs to the urocanase family. The cofactor is NAD(+).

The protein localises to the cytoplasm. It catalyses the reaction 4-imidazolone-5-propanoate = trans-urocanate + H2O. It functions in the pathway amino-acid degradation; L-histidine degradation into L-glutamate; N-formimidoyl-L-glutamate from L-histidine: step 2/3. Catalyzes the conversion of urocanate to 4-imidazolone-5-propionate. The polypeptide is Urocanate hydratase (Idiomarina loihiensis (strain ATCC BAA-735 / DSM 15497 / L2-TR)).